Here is a 203-residue protein sequence, read N- to C-terminus: Guanylate kinase (203 aa).

The 179-residue stretch at 3–181 (GTLYIVSAPS…ALDDLKAIFR (179 aa)) folds into the Guanylate kinase-like domain. 10 to 17 (APSGAGKT) provides a ligand contact to ATP.

The protein belongs to the guanylate kinase family.

It is found in the cytoplasm. It catalyses the reaction GMP + ATP = GDP + ADP. Functionally, essential for recycling GMP and indirectly, cGMP. The chain is Guanylate kinase (gmk) from Pseudomonas aeruginosa (strain ATCC 15692 / DSM 22644 / CIP 104116 / JCM 14847 / LMG 12228 / 1C / PRS 101 / PAO1).